Reading from the N-terminus, the 1025-residue chain is Error-prone DNA polymerase (1025 aa).

Belongs to the DNA polymerase type-C family. DnaE2 subfamily.

It localises to the cytoplasm. It carries out the reaction DNA(n) + a 2'-deoxyribonucleoside 5'-triphosphate = DNA(n+1) + diphosphate. Functionally, DNA polymerase involved in damage-induced mutagenesis and translesion synthesis (TLS). It is not the major replicative DNA polymerase. The protein is Error-prone DNA polymerase of Pseudomonas fluorescens (strain Pf0-1).